Here is a 279-residue protein sequence, read N- to C-terminus: Urease accessory protein UreD (279 aa).

This sequence belongs to the UreD family. As to quaternary structure, ureD, UreF and UreG form a complex that acts as a GTP-hydrolysis-dependent molecular chaperone, activating the urease apoprotein by helping to assemble the nickel containing metallocenter of UreC. The UreE protein probably delivers the nickel.

It is found in the cytoplasm. Functionally, required for maturation of urease via the functional incorporation of the urease nickel metallocenter. This is Urease accessory protein UreD from Trichormus variabilis (strain ATCC 29413 / PCC 7937) (Anabaena variabilis).